Reading from the N-terminus, the 178-residue chain is Endothelin-2 (178 aa).

An N-terminal signal peptide occupies residues 1 to 24 (MPAPGVHHPNTASPFLKTVAAGKG). A propeptide spanning residues 25–46 (QVAAAPEHPAPSARARGSHLRP) is cleaved from the precursor. Cystine bridges form between cysteine 49-cysteine 63 and cysteine 51-cysteine 59. The propeptide occupies 70–178 (VNTPGQTAPY…RPTHPRRRKR (109 aa)). The interval 96–111 (CECSSGGDPACATFCH) is endothelin-like. Residues 156–178 (RFPRRPQEAGRQLRPTHPRRRKR) are disordered. Basic residues predominate over residues 169–178 (RPTHPRRRKR).

This sequence belongs to the endothelin/sarafotoxin family.

The protein resides in the secreted. Its function is as follows. Endothelins are endothelium-derived vasoconstrictor peptides. The protein is Endothelin-2 (EDN2) of Canis lupus familiaris (Dog).